The primary structure comprises 1165 residues: Linoleate diol synthase (1165 aa).

A fatty acid alpha-dioxygenase region spans residues 104–448 (TDGLINDLWD…DGAFDDTELV (345 aa)). His203 contributes to the heme b binding site. Ca(2+)-binding residues include Asp204, Ser219, Tyr221, Asp223, and Ser225. Tyr376 is a catalytic residue. His379 provides a ligand contact to heme b. The epoxy alcohol synthase stretch occupies residues 666-1161 (EVLSNQKDYK…ATTMKINWEG (496 aa)). Cys1080 lines the heme pocket. Residues 1114-1134 (RSYPASQWPGQAGRPPRDPAW) are disordered.

The protein belongs to the peroxidase family. In terms of assembly, homotetramer. Requires heme b as cofactor. Ca(2+) is required as a cofactor. Heme serves as cofactor. The N-terminus is blocked.

The catalysed reaction is (9Z,12Z)-octadecadienoate + O2 = (8R,9Z,12Z)-8-hydroperoxyoctadeca-9,12-dienoate. The enzyme catalyses (8R,9Z,12Z)-8-hydroperoxyoctadeca-9,12-dienoate = (7S,8S,9Z,12Z)-7,8-dihydroxyoctadeca-9,12-dienoate. In terms of biological role, 7,8-linoleate diol synthase is a bifunctional enzyme that converts linoleic acid (18:2n-6) into 8-hydroperoxy-8(E),12(Z)-octadecadienoic acid (8-HPODE) and then catalyzes the isomerization of the resulting hydroperoxide to 7,8-dihydroxy-9(Z),12(Z)-octadecadienoic acid (7,8-DiHODE). This is Linoleate diol synthase from Gaeumannomyces graminis (Turf grass take-all root rot fungus).